The following is a 603-amino-acid chain: Probable methyltransferase PMT20 (603 aa).

At 1-16 (MKSGKQSSQPEKGTSR) the chain is on the cytoplasmic side. The helical; Signal-anchor for type II membrane protein transmembrane segment at 17 to 37 (ILSLTVLFIAFCGFSFYLGGI) threads the bilayer. Over 38–603 (FCSERDKIVA…KLWFSSNQTS (566 aa)) the chain is Lumenal. Asn-313 and Asn-600 each carry an N-linked (GlcNAc...) asparagine glycan.

It belongs to the methyltransferase superfamily.

The protein localises to the golgi apparatus membrane. This Arabidopsis thaliana (Mouse-ear cress) protein is Probable methyltransferase PMT20.